Reading from the N-terminus, the 659-residue chain is DNA mismatch repair protein MutL (659 aa).

The disordered stretch occupies residues 338–459 (GAPRGASKPG…DTTSERDSLP (122 aa)). Residues 352–362 (SPEHSPTDRDA) are compositionally biased toward basic and acidic residues. Over residues 374 to 391 (SDGNGQRTAASGATSESP) the composition is skewed to polar residues.

It belongs to the DNA mismatch repair MutL/HexB family.

This protein is involved in the repair of mismatches in DNA. It is required for dam-dependent methyl-directed DNA mismatch repair. May act as a 'molecular matchmaker', a protein that promotes the formation of a stable complex between two or more DNA-binding proteins in an ATP-dependent manner without itself being part of a final effector complex. This Halobacterium salinarum (strain ATCC 29341 / DSM 671 / R1) protein is DNA mismatch repair protein MutL.